The primary structure comprises 1212 residues: MFSLLGHAVNYGSHRTRRSFSRIKEVLKLPNLTDVQTQSYKWFLNEGIREMFDDIMPISDFSGKLSLEFVDYKLLKPKYTLEEARDHDANYSAPLHVTLKLTNHETGEIKTQDVFFGEFPLMTDSGTFVINGAERIIVSQLVRSPGVYYHSDFDKNGRQIFGATVIPNRGAWLEYETDAKDLAYVRIDRTRKLPLTVLIRALGFGSDSEVADMFGESDSLRFTLEKDIHKNPADSRVAEALKDIYERLRPGEPKTTDSSRSLLYARFFDPRRYDLAPVGRYKINKKLSLKNRLLRQTLAETLADPDTGEIIAKKGDVVTHEILDKLSPYLDRDDFKMVTYEPSKEGVLPDPVTVQEIKVYSKVDPERVIKLMSNGHIADDVKHLTPADVLASINYFFNLQDNIGTTDDIDHLGNRRIRRVGELLQNQFRIGLARMERVVRERMSIQDISTVTPQQLINIRPVVASVKEFFGSSQLSQFMDQNNPLGELTHKRRMSALGPGGLSRDRAGYEVRDVHYTHYGRLCPIETPEGPNIGLINSLATYAIVNKYGFIETPYRRVSWDTHKVTDKIDYLTADVEDNYIIAGANAPLNEDGSFKDKIVLARHKEDNLEVTPDKIDYMDVIPKQVVSVTSACIPFLENDDSNRALMGANHQRQAVPLINPHAPIVGTGMEYRAAHDSGDALVAKAPGVVEYVDANEIRIRRDDDTLDKYVLEKFRRSNATKNYNQTPAVKQGERVVADEVIADGPAMENGELALGQNPIIAFLTWNMYNYEDAVMISERMVKDDVYTSIHIEDYESEARDTKLGPEEITREIPNVGEDALKDLDEEGIVRIGAEVQDGDILVGKVTPKGVTELSAEERLLHAIFGEKAREVRDTSLRVPHGGGGIVQNVQVFTREAGDELPPGVNKMVRVYIVQKRKIQVGDKMSGRHGNKGTIALVCPEEDMPYLPDGRPVDICLNPMGVPSRMNIGQVLELHLGIAAKQLGIHVATPVFDGASEDDMWNMVREAGIGKDGKTVLYDGRTGEPFHNRVSVGIMYYLKLTHMVDDKIHARSIGPYSLVTQQPLGGKAQFGGQRFGEMEVWALEAYGAAYTLQEILTYKSDDVVGRVKAYEAIVKGERIPKPGVPESFRVLVKELQSLGLDIKVLDMDHKEIELRDMDDDSNDHFNIDTLSKLAEQQEKKKLAEEAAKKDDKSAEPVDQSDSSTSSDDKVSK.

Positions 1176–1195 are enriched in basic and acidic residues; that stretch reads QQEKKKLAEEAAKKDDKSAE. The interval 1176 to 1212 is disordered; sequence QQEKKKLAEEAAKKDDKSAEPVDQSDSSTSSDDKVSK.

This sequence belongs to the RNA polymerase beta chain family. In terms of assembly, the RNAP catalytic core consists of 2 alpha, 1 beta, 1 beta' and 1 omega subunit. When a sigma factor is associated with the core the holoenzyme is formed, which can initiate transcription.

It catalyses the reaction RNA(n) + a ribonucleoside 5'-triphosphate = RNA(n+1) + diphosphate. Its function is as follows. DNA-dependent RNA polymerase catalyzes the transcription of DNA into RNA using the four ribonucleoside triphosphates as substrates. The sequence is that of DNA-directed RNA polymerase subunit beta from Lactobacillus gasseri (strain ATCC 33323 / DSM 20243 / BCRC 14619 / CIP 102991 / JCM 1131 / KCTC 3163 / NCIMB 11718 / NCTC 13722 / AM63).